The primary structure comprises 585 residues: Glutamine--tRNA ligase (585 aa).

Residues 51-61 carry the 'HIGH' region motif; it reads PEPNGYLHIGH. ATP-binding positions include 52–54 and 58–64; these read EPN and HIGHAKS. L-glutamine is bound by residues Asp-84 and Tyr-238. Residues Thr-257 and 292 to 293 contribute to the ATP site; that span reads RL. The 'KMSKS' region signature appears at 299–303; that stretch reads ITSKR.

This sequence belongs to the class-I aminoacyl-tRNA synthetase family. Monomer.

It is found in the cytoplasm. The enzyme catalyses tRNA(Gln) + L-glutamine + ATP = L-glutaminyl-tRNA(Gln) + AMP + diphosphate. This Cupriavidus necator (strain ATCC 17699 / DSM 428 / KCTC 22496 / NCIMB 10442 / H16 / Stanier 337) (Ralstonia eutropha) protein is Glutamine--tRNA ligase.